The following is a 507-amino-acid chain: Microcystinase C (507 aa).

Residues M1–G21 form the signal peptide. Zn(2+)-binding residues include D167, H169, and H191.

This sequence belongs to the peptidase M81 family. Zn(2+) is required as a cofactor.

With respect to regulation, inhibited by the metal chelators EDTA and 1,10-phenanthroline. In terms of biological role, involved in peptidolytic degradation of cyclic heptapeptide hepatotoxin microcystin (MC). Cleaves both linear MC and the tetrapeptide degradation product of MC. Cleaves the Adda-Glu peptide bond of linear MC heptapeptides. The chain is Microcystinase C from Sphingomonas sp.